The sequence spans 294 residues: 3-methyl-2-oxobutanoate hydroxymethyltransferase (294 aa).

Polar residues predominate over residues 1–12 (MSASAESTNATP). Positions 1-21 (MSASAESTNATPYGTLPPTAA) are disordered. Mg(2+) contacts are provided by Asp69 and Asp112. Residues 69-70 (DS), Asp112, and Lys141 contribute to the 3-methyl-2-oxobutanoate site. Glu143 contributes to the Mg(2+) binding site. Glu210 serves as the catalytic Proton acceptor.

This sequence belongs to the PanB family. As to quaternary structure, homodecamer; pentamer of dimers. Mg(2+) serves as cofactor.

Its subcellular location is the cytoplasm. It carries out the reaction 3-methyl-2-oxobutanoate + (6R)-5,10-methylene-5,6,7,8-tetrahydrofolate + H2O = 2-dehydropantoate + (6S)-5,6,7,8-tetrahydrofolate. It functions in the pathway cofactor biosynthesis; (R)-pantothenate biosynthesis; (R)-pantoate from 3-methyl-2-oxobutanoate: step 1/2. Catalyzes the reversible reaction in which hydroxymethyl group from 5,10-methylenetetrahydrofolate is transferred onto alpha-ketoisovalerate to form ketopantoate. The polypeptide is 3-methyl-2-oxobutanoate hydroxymethyltransferase (Albidiferax ferrireducens (strain ATCC BAA-621 / DSM 15236 / T118) (Rhodoferax ferrireducens)).